The sequence spans 1583 residues: Pentafunctional AROM polypeptide (1583 aa).

Positions 1–384 (MSNPTKISIL…YETRASVVAN (384 aa)) are 3-dehydroquinate synthase. Residues 44–46 (DTN), 81–84 (EVSK), 114–116 (GGV), and Asp-119 contribute to the NAD(+) site. Arg-130 contributes to the 7-phospho-2-dehydro-3-deoxy-D-arabino-heptonate binding site. NAD(+) is bound at residue 139–140 (TT). 7-phospho-2-dehydro-3-deoxy-D-arabino-heptonate contacts are provided by Asp-146 and Lys-152. Residue Lys-161 participates in NAD(+) binding. Asn-162 provides a ligand contact to 7-phospho-2-dehydro-3-deoxy-D-arabino-heptonate. NAD(+) is bound by residues 179–182 (FLET) and Asn-190. Glu-194 is a binding site for Zn(2+). Residues 194–197 (EVIK) and Lys-250 each bind 7-phospho-2-dehydro-3-deoxy-D-arabino-heptonate. The active-site Proton acceptor; for 3-dehydroquinate synthase activity is Glu-260. 7-phospho-2-dehydro-3-deoxy-D-arabino-heptonate contacts are provided by residues 264–268 (RNLLN) and His-271. His-271 contributes to the Zn(2+) binding site. His-275 (proton acceptor; for 3-dehydroquinate synthase activity) is an active-site residue. The 7-phospho-2-dehydro-3-deoxy-D-arabino-heptonate site is built by His-287 and Lys-356. His-287 is a Zn(2+) binding site. Positions 397 to 842 (VHPGVAQSSN…WDTLRQLFKV (446 aa)) are EPSP synthase. Cys-824 (for EPSP synthase activity) is an active-site residue. Residues 863-1055 (NASIYIIGMR…KEKEHSFFAS (193 aa)) are shikimate kinase. Residue 870 to 877 (GMRGAGKS) participates in ATP binding. The tract at residues 1056 to 1276 (LTLPDLREAG…AAPGQLSATE (221 aa)) is 3-dehydroquinase. The active-site Proton acceptor; for 3-dehydroquinate dehydratase activity is His-1179. The active-site Schiff-base intermediate with substrate; for 3-dehydroquinate dehydratase activity is the Lys-1207. A shikimate dehydrogenase region spans residues 1289–1583 (PKKFAIFGSP…SARACSSPLI (295 aa)).

It in the N-terminal section; belongs to the sugar phosphate cyclases superfamily. Dehydroquinate synthase family. The protein in the 2nd section; belongs to the EPSP synthase family. In the 3rd section; belongs to the shikimate kinase family. This sequence in the 4th section; belongs to the type-I 3-dehydroquinase family. It in the C-terminal section; belongs to the shikimate dehydrogenase family. As to quaternary structure, homodimer. Zn(2+) is required as a cofactor.

The protein resides in the cytoplasm. The catalysed reaction is 7-phospho-2-dehydro-3-deoxy-D-arabino-heptonate = 3-dehydroquinate + phosphate. It catalyses the reaction 3-dehydroquinate = 3-dehydroshikimate + H2O. The enzyme catalyses shikimate + NADP(+) = 3-dehydroshikimate + NADPH + H(+). It carries out the reaction shikimate + ATP = 3-phosphoshikimate + ADP + H(+). The catalysed reaction is 3-phosphoshikimate + phosphoenolpyruvate = 5-O-(1-carboxyvinyl)-3-phosphoshikimate + phosphate. It participates in metabolic intermediate biosynthesis; chorismate biosynthesis; chorismate from D-erythrose 4-phosphate and phosphoenolpyruvate: step 2/7. It functions in the pathway metabolic intermediate biosynthesis; chorismate biosynthesis; chorismate from D-erythrose 4-phosphate and phosphoenolpyruvate: step 3/7. Its pathway is metabolic intermediate biosynthesis; chorismate biosynthesis; chorismate from D-erythrose 4-phosphate and phosphoenolpyruvate: step 4/7. The protein operates within metabolic intermediate biosynthesis; chorismate biosynthesis; chorismate from D-erythrose 4-phosphate and phosphoenolpyruvate: step 5/7. It participates in metabolic intermediate biosynthesis; chorismate biosynthesis; chorismate from D-erythrose 4-phosphate and phosphoenolpyruvate: step 6/7. In terms of biological role, the AROM polypeptide catalyzes 5 consecutive enzymatic reactions in prechorismate polyaromatic amino acid biosynthesis. This is Pentafunctional AROM polypeptide (aromA) from Emericella nidulans (strain FGSC A4 / ATCC 38163 / CBS 112.46 / NRRL 194 / M139) (Aspergillus nidulans).